The chain runs to 199 residues: Fe/S biogenesis protein NfuA (199 aa).

Residues cysteine 151 and cysteine 154 each contribute to the [4Fe-4S] cluster site.

It belongs to the NfuA family. As to quaternary structure, homodimer. It depends on [4Fe-4S] cluster as a cofactor.

Functionally, involved in iron-sulfur cluster biogenesis. Binds a 4Fe-4S cluster, can transfer this cluster to apoproteins, and thereby intervenes in the maturation of Fe/S proteins. Could also act as a scaffold/chaperone for damaged Fe/S proteins. The sequence is that of Fe/S biogenesis protein NfuA from Xanthomonas campestris pv. campestris (strain 8004).